The chain runs to 268 residues: Tryptophan synthase alpha chain (268 aa).

Active-site proton acceptor residues include E49 and D60.

Belongs to the TrpA family. In terms of assembly, tetramer of two alpha and two beta chains.

It carries out the reaction (1S,2R)-1-C-(indol-3-yl)glycerol 3-phosphate + L-serine = D-glyceraldehyde 3-phosphate + L-tryptophan + H2O. It functions in the pathway amino-acid biosynthesis; L-tryptophan biosynthesis; L-tryptophan from chorismate: step 5/5. Functionally, the alpha subunit is responsible for the aldol cleavage of indoleglycerol phosphate to indole and glyceraldehyde 3-phosphate. The polypeptide is Tryptophan synthase alpha chain (Edwardsiella ictaluri (strain 93-146)).